The following is a 347-amino-acid chain: NADH-ubiquinone oxidoreductase chain 2 (347 aa).

Helical transmembrane passes span 3 to 23, 25 to 45, 59 to 79, 93 to 115, 149 to 169, 178 to 198, 200 to 220, 242 to 262, 274 to 294, and 323 to 343; these read PPILIIILSTVISGTMIVLTS, HWLLTWIGFEMNMLAIIPILM, YFLTQATASMLLMMGIIINLL, MASTMMTIAMTMKLGLAPFHFWV, INTNLLMTMATMSVLIGGWGG, ILAYSSIAHMGWMVAIMTYNP, VMILNLMMYIMMTLTSFMLFI, SFILVLMLSLGGLPPLSGFIP, EMIILPTLLAITALLNLYFYM, and MALLPPLIIISTMLLPLTPMM.

The protein belongs to the complex I subunit 2 family. In terms of assembly, core subunit of respiratory chain NADH dehydrogenase (Complex I) which is composed of 45 different subunits. Interacts with TMEM242.

It localises to the mitochondrion inner membrane. It carries out the reaction a ubiquinone + NADH + 5 H(+)(in) = a ubiquinol + NAD(+) + 4 H(+)(out). Core subunit of the mitochondrial membrane respiratory chain NADH dehydrogenase (Complex I) which catalyzes electron transfer from NADH through the respiratory chain, using ubiquinone as an electron acceptor. Essential for the catalytic activity and assembly of complex I. This Nandinia binotata (African palm civet) protein is NADH-ubiquinone oxidoreductase chain 2.